A 103-amino-acid chain; its full sequence is Thioredoxin (103 aa).

Residues Met1–Val103 form the Thioredoxin domain. Residues Cys28 and Cys31 are joined by a disulfide bond.

This sequence belongs to the thioredoxin family.

Functionally, component of the thioredoxin-thioredoxin reductase system. Participates in various redox reactions through the reversible oxidation of its active center dithiol to a disulfide and catalyzes dithiol-disulfide exchange reactions. The polypeptide is Thioredoxin (trxA) (Listeria innocua serovar 6a (strain ATCC BAA-680 / CLIP 11262)).